The primary structure comprises 497 residues: 4,4'-diaponeurosporene oxygenase (497 aa).

7 to 19 contributes to the FAD binding site; sequence VIGGGLGGISAAI.

The protein belongs to the carotenoid/retinoid oxidoreductase family. CrtP subfamily. The cofactor is FAD.

The enzyme catalyses all-trans-4,4'-diaponeurosporene + 2 AH2 + 2 O2 = 4,4'-diaponeurosporenal + 2 A + 3 H2O. It functions in the pathway carotenoid biosynthesis; staphyloxanthin biosynthesis; staphyloxanthin from farnesyl diphosphate: step 3/5. In terms of biological role, involved in the biosynthesis of the yellow-orange carotenoid staphyloxanthin, which plays a role in the virulence via its protective function against oxidative stress. Catalyzes the oxidation of the terminal methyl side group of 4,4'-diaponeurosporene to form 4,4'-diaponeurosporen-4-al. In Staphylococcus aureus (strain bovine RF122 / ET3-1), this protein is 4,4'-diaponeurosporene oxygenase.